The sequence spans 183 residues: uncharacterized protein (183 aa).

Belongs to the Bcl-2 family.

This is an uncharacterized protein from Equine herpesvirus 2 (strain 86/87) (EHV-2).